The following is a 104-amino-acid chain: Complex III assembly factor LYRM7 (104 aa).

The stretch at 21–48 (VFQNDHRALEAARQRINEEFKKNKRECS) forms a coiled coil.

This sequence belongs to the complex I LYR family. As to quaternary structure, interacts with UQCRFS1.

The protein resides in the mitochondrion matrix. In terms of biological role, assembly factor required for Rieske Fe-S protein UQCRFS1 incorporation into the cytochrome b-c1 (CIII) complex. Functions as a chaperone, binding to this subunit within the mitochondrial matrix and stabilizing it prior to its translocation and insertion into the late CIII dimeric intermediate within the mitochondrial inner membrane. This is Complex III assembly factor LYRM7 (lyrm7) from Xenopus laevis (African clawed frog).